A 319-amino-acid polypeptide reads, in one-letter code: RWD domain-containing protein 2B (319 aa).

In terms of domain architecture, RWD spans 41–165 (AELDLLASMF…EWVREHASGY (125 aa)). S275 carries the phosphoserine modification.

Ubiquitous.

The polypeptide is RWD domain-containing protein 2B (RWDD2B) (Homo sapiens (Human)).